The sequence spans 378 residues: Cobalt-precorrin-5B C(1)-methyltransferase (378 aa).

This sequence belongs to the CbiD family.

The catalysed reaction is Co-precorrin-5B + S-adenosyl-L-methionine = Co-precorrin-6A + S-adenosyl-L-homocysteine. Its pathway is cofactor biosynthesis; adenosylcobalamin biosynthesis; cob(II)yrinate a,c-diamide from sirohydrochlorin (anaerobic route): step 6/10. Its function is as follows. Catalyzes the methylation of C-1 in cobalt-precorrin-5B to form cobalt-precorrin-6A. This is Cobalt-precorrin-5B C(1)-methyltransferase from Methanococcus aeolicus (strain ATCC BAA-1280 / DSM 17508 / OCM 812 / Nankai-3).